Consider the following 367-residue polypeptide: Anhydro-N-acetylmuramic acid kinase (367 aa).

G13–D20 contributes to the ATP binding site.

This sequence belongs to the anhydro-N-acetylmuramic acid kinase family.

It catalyses the reaction 1,6-anhydro-N-acetyl-beta-muramate + ATP + H2O = N-acetyl-D-muramate 6-phosphate + ADP + H(+). It functions in the pathway amino-sugar metabolism; 1,6-anhydro-N-acetylmuramate degradation. Its pathway is cell wall biogenesis; peptidoglycan recycling. In terms of biological role, catalyzes the specific phosphorylation of 1,6-anhydro-N-acetylmuramic acid (anhMurNAc) with the simultaneous cleavage of the 1,6-anhydro ring, generating MurNAc-6-P. Is required for the utilization of anhMurNAc either imported from the medium or derived from its own cell wall murein, and thus plays a role in cell wall recycling. The polypeptide is Anhydro-N-acetylmuramic acid kinase (Neisseria meningitidis serogroup A / serotype 4A (strain DSM 15465 / Z2491)).